Consider the following 416-residue polypeptide: UDP-N-acetylglucosamine 1-carboxyvinyltransferase (416 aa).

K22–N23 is a binding site for phosphoenolpyruvate. R92 is a binding site for UDP-N-acetyl-alpha-D-glucosamine. The active-site Proton donor is C116. C116 carries the post-translational modification 2-(S-cysteinyl)pyruvic acid O-phosphothioketal. UDP-N-acetyl-alpha-D-glucosamine-binding positions include R121–Q125, D304, and I326.

It belongs to the EPSP synthase family. MurA subfamily.

It is found in the cytoplasm. The enzyme catalyses phosphoenolpyruvate + UDP-N-acetyl-alpha-D-glucosamine = UDP-N-acetyl-3-O-(1-carboxyvinyl)-alpha-D-glucosamine + phosphate. The protein operates within cell wall biogenesis; peptidoglycan biosynthesis. In terms of biological role, cell wall formation. Adds enolpyruvyl to UDP-N-acetylglucosamine. The sequence is that of UDP-N-acetylglucosamine 1-carboxyvinyltransferase from Cupriavidus metallidurans (strain ATCC 43123 / DSM 2839 / NBRC 102507 / CH34) (Ralstonia metallidurans).